The sequence spans 555 residues: Trehalase (555 aa).

A signal peptide spans 1 to 16 (MIPFLLMVAFADTVLQ). An N-linked (GlcNAc...) asparagine glycan is attached at Asn46. Substrate contacts are provided by residues Arg164, 171–172 (WD), and Asn208. Asn216 carries N-linked (GlcNAc...) asparagine glycosylation. Substrate contacts are provided by residues 217-219 (RSQ), 282-284 (RPE), and Gly316. The active-site Proton donor/acceptor is the Asp318. Asn334 and Asn371 each carry an N-linked (GlcNAc...) asparagine glycan. Residue Glu516 is the Proton donor/acceptor of the active site. Glu531 contacts substrate.

It belongs to the glycosyl hydrolase 37 family. In terms of tissue distribution, bean-shaped accessory glands (bags).

The protein localises to the secreted. It catalyses the reaction alpha,alpha-trehalose + H2O = alpha-D-glucose + beta-D-glucose. The protein is Trehalase of Tenebrio molitor (Yellow mealworm beetle).